The following is an 833-amino-acid chain: Serine/threonine-protein phosphatase 4 regulatory subunit 3A (833 aa).

The 100-residue stretch at 1 to 100 (MTDTRRRVKV…DEIWEKICQV (100 aa)) folds into the WH1 domain. Serine 117 and serine 127 each carry phosphoserine. Residue lysine 655 is modified to N6-acetyllysine. Over residues 683 to 694 (FNTDEDDMEDGE) the composition is skewed to acidic residues. Disordered stretches follow at residues 683–712 (FNTD…IMDP) and 733–833 (KTNL…KFDS). Phosphoserine occurs at positions 698, 741, 768, 771, 774, 777, and 780. Polar residues predominate over residues 734–751 (TNLSGRQSPSFKLSLSSG). The span at 752-768 (TKTNLTSQSSTTNLPGS) shows a compositional bias: low complexity. Residues 785–794 (PKNTSQTAAI) are compositionally biased toward polar residues. A compositionally biased stretch (acidic residues) spans 806 to 820 (YPDDDEDDDEDEDKE).

It belongs to the SMEK family. As to quaternary structure, serine/threonine-protein phosphatase 4 (PP4) occurs in different assemblies of the catalytic and one or more regulatory subunits. Component of the PP4 complex PPP4C-PPP4R2-PPP4R3A. Interacts with PPP4C; the interaction requires PPP4R2.

It localises to the cytoplasm. The protein resides in the cytoskeleton. It is found in the microtubule organizing center. The protein localises to the centrosome. Its subcellular location is the nucleus. Its function is as follows. Regulatory subunit of serine/threonine-protein phosphatase 4. May regulate the activity of PPP4C at centrosomal microtubule organizing centers. The PPP4C-PPP4R2-PPP4R3A PP4 complex specifically dephosphorylates H2AX phosphorylated on 'Ser-140' (gamma-H2AX) generated during DNA replication and required for DNA DSB repair. The polypeptide is Serine/threonine-protein phosphatase 4 regulatory subunit 3A (Homo sapiens (Human)).